We begin with the raw amino-acid sequence, 442 residues long: Signal recognition particle 54 kDa protein (442 aa).

Residues 106-113 (GLQGSGKT), 186-190 (DTAGR), and 244-247 (TKLD) each bind GTP.

It belongs to the GTP-binding SRP family. SRP54 subfamily. In terms of assembly, part of the signal recognition particle protein translocation system, which is composed of SRP and FtsY. Archaeal SRP consists of a 7S RNA molecule of 300 nucleotides and two protein subunits: SRP54 and SRP19.

It localises to the cytoplasm. The enzyme catalyses GTP + H2O = GDP + phosphate + H(+). Its function is as follows. Involved in targeting and insertion of nascent membrane proteins into the cytoplasmic membrane. Binds to the hydrophobic signal sequence of the ribosome-nascent chain (RNC) as it emerges from the ribosomes. The SRP-RNC complex is then targeted to the cytoplasmic membrane where it interacts with the SRP receptor FtsY. The polypeptide is Signal recognition particle 54 kDa protein (Methanothermobacter thermautotrophicus (strain ATCC 29096 / DSM 1053 / JCM 10044 / NBRC 100330 / Delta H) (Methanobacterium thermoautotrophicum)).